The chain runs to 857 residues: Leucine-rich repeat extensin-like protein 5 (857 aa).

The N-terminal stretch at 1-31 is a signal peptide; that stretch reads MKTKMMMKNTSLIFVLLFITFFFTSISYSLS. The stretch at 32–53 is one LRR 1 repeat; that stretch reads LTFNGDLSDNEVRLITQRQLLY. N-linked (GlcNAc...) asparagine glycosylation occurs at N98. 10 LRR repeats span residues 125–149, 150–172, 174–197, 198–221, 223–244, 246–267, 268–291, 292–315, 316–339, and 341–362; these read IRTVAGIDLNHADIAGYLPQELGLL, TDLALFHINSNRFCGTVPHRFNR, KLLFELDLSNNRFAGIFPTVVLQL, PSLKFLDLRFNEFEGPVPRELFSK, LDAIFINHNRFRFELPDNLGDS, VSVIVVANNHFHGCIPTSLGDM, RNLEEIIFMENGFNSCLPSQIGRL, KNVTVFDFSFNELVGSLPASIGGM, VSMEQLNVAHNRFSGKIPATICQL, and RLENFTFSYNFFTGEPPVCLGL. N-linked (GlcNAc...) asparagine glycosylation occurs at N293. N-linked (GlcNAc...) asparagine glycosylation occurs at N344. 2 disordered regions span residues 406 to 776 and 817 to 839; these read PPVV…EYSP and YSPPPPPVIHHSQPPPPPIYEGP. 2 stretches are compositionally biased toward pro residues: residues 408-571 and 579-768; these read VVVP…PTPI and PIIP…PQSH. Residues 615-857 are contains the Ser-Pro(4) repeats; that stretch reads SPPPSTPTPV…YASPPPPPFY (243 aa).

Hydroxylated on proline residues in the S-P-P-P-P repeat. In terms of processing, O-glycosylated on hydroxyprolines. Expressed in roots, leaves and flowers.

The protein resides in the secreted. Its subcellular location is the cell wall. Modulates cell morphogenesis by regulating cell wall formation and assembly, and/or growth polarization. In Arabidopsis thaliana (Mouse-ear cress), this protein is Leucine-rich repeat extensin-like protein 5 (LRX5).